The chain runs to 468 residues: DNA methyltransferase 1-associated protein 1 (468 aa).

2 stretches are compositionally biased toward basic and acidic residues: residues 1–11 (MATGADVRDIL) and 26–48 (SKKDIINPDKKKSKKSSETLTFK). A disordered region spans residues 1 to 48 (MATGADVRDILELGGPEGDAASGTISKKDIINPDKKKSKKSSETLTFK). K27 participates in a covalent cross-link: Glycyl lysine isopeptide (Lys-Gly) (interchain with G-Cter in SUMO2). In terms of domain architecture, SANT spans 149-199 (DDAWTKAETDHLFDLSRRFDLRFVVIHDRYDHQQFKKRSVEDLKERYYHIC). K214 participates in a covalent cross-link: Glycyl lysine isopeptide (Lys-Gly) (interchain with G-Cter in SUMO2). The stretch at 225–275 (RRKEQLERLYNRTPEQVAEEEYLLQELRKIEARKKEREKRSQDLQKLITAA) forms a coiled coil. The segment covering 258-267 (KKEREKRSQD) has biased composition (basic and acidic residues). Disordered regions lie at residues 258 to 305 (KKER…PAVP) and 411 to 468 (AVGP…AKKP). Phosphothreonine is present on T446. S449 is modified (phosphoserine).

As to quaternary structure, component of the NuA4 histone acetyltransferase complex which contains the catalytic subunit KAT5/TIP60 and the subunits EP400, TRRAP/PAF400, BRD8/SMAP, EPC1, DMAP1/DNMAP1, RUVBL1/TIP49, RUVBL2, ING3, actin, ACTL6A/BAF53A, MORF4L1/MRG15, MORF4L2/MRGX, MRGBP, YEATS4/GAS41, VPS72/YL1 and MEAF6. Component of a NuA4-related complex which contains EP400, TRRAP/PAF400, SRCAP, BRD8/SMAP, EPC1, DMAP1/DNMAP1, RUVBL1/TIP49, RUVBL2, actin, ACTL6A/BAF53A, VPS72 and YEATS4/GAS41. DMAP1 also forms a complex with DNMT1 and HDAC2. Throughout S phase it interacts directly with the N-terminus of DNMT1, which serves to recruit DMAP1 to replication foci. DMAP1 interacts with ING1, a component of the mSIN3A transcription repressor complex, although this interaction is not required for recruitment of ING1 to heterochromatin. Interacts directly with the transcriptional corepressor TSG101. Interacts with URI1. Interacts with the pro-apoptotic protein DAXX.

It is found in the nucleus. It localises to the cytoplasm. Its function is as follows. Involved in transcription repression and activation. Its interaction with HDAC2 may provide a mechanism for histone deacetylation in heterochromatin following replication of DNA at late firing origins. Can also repress transcription independently of histone deacetylase activity. May specifically potentiate DAXX-mediated repression of glucocorticoid receptor-dependent transcription. Component of the NuA4 histone acetyltransferase (HAT) complex which is involved in transcriptional activation of select genes principally by acetylation of nucleosomal histones H4 and H2A. This modification may both alter nucleosome - DNA interactions and promote interaction of the modified histones with other proteins which positively regulate transcription. This complex may be required for the activation of transcriptional programs associated with oncogene and proto-oncogene mediated growth induction, tumor suppressor mediated growth arrest and replicative senescence, apoptosis, and DNA repair. NuA4 may also play a direct role in DNA repair when recruited to sites of DNA damage. Participates in the nuclear localization of URI1 and increases its transcriptional corepressor activity. The protein is DNA methyltransferase 1-associated protein 1 (Dmap1) of Mus musculus (Mouse).